The sequence spans 476 residues: Salicylate biosynthesis isochorismate synthase (476 aa).

The interval arginine 181–glutamine 202 is disordered.

It belongs to the isochorismate synthase family.

The enzyme catalyses chorismate = isochorismate. It participates in siderophore biosynthesis; salicylate biosynthesis. Functionally, involved in the conversion of chorismate to salicylate. In Pseudomonas aeruginosa (strain ATCC 15692 / DSM 22644 / CIP 104116 / JCM 14847 / LMG 12228 / 1C / PRS 101 / PAO1), this protein is Salicylate biosynthesis isochorismate synthase (pchA).